An 804-amino-acid polypeptide reads, in one-letter code: Endoplasmin (804 aa).

A signal peptide spans 1–21; the sequence is MRALWVLGLCCVLLTFGSVRA. Residues 42–44 carry the SRT pseudosubstrate motif motif; sequence SRT. N-linked (GlcNAc...) asparagine glycosylation is present at N62. S64 is modified (phosphoserine). Residue N107 is glycosylated (N-linked (GlcNAc...) asparagine). Positions 107, 149, and 162 each coordinate ATP. K168 bears the N6-(2-hydroxyisobutyryl)lysine mark. S172 bears the Phosphoserine mark. F199 serves as a coordination point for ATP. N-linked (GlcNAc...) asparagine glycosylation occurs at N217. The tract at residues 288-323 is disordered; sequence TVEEPMEEEEAAKEEKEESDDEAAVEEEEEEKKPKT. A compositionally biased stretch (acidic residues) spans 289–317; sequence VEEPMEEEEAAKEEKEESDDEAAVEEEEE. Phosphoserine occurs at positions 306 and 403. The residue at position 404 (K404) is an N6-succinyllysine. N445 carries N-linked (GlcNAc...) asparagine glycosylation. A Phosphoserine modification is found at S447. Position 479 is an N6-acetyllysine (K479). N-linked (GlcNAc...) asparagine glycans are attached at residues N481 and N502. Residue K633 is modified to N6-succinyllysine. The segment at 750-804 is disordered; sequence DPDAKVEEEPEEEPEETTEDTTEDTEQDDDEEMDAGADEEEQETSETSTAEKDEL. Residues 757 to 793 show a composition bias toward acidic residues; it reads EEPEEEPEETTEDTTEDTEQDDDEEMDAGADEEEQET. A Prevents secretion from ER motif is present at residues 801–804; that stretch reads KDEL.

The protein belongs to the heat shock protein 90 family. Homodimer; disulfide-linked. Component of an EIF2 complex at least composed of CELF1/CUGBP1, CALR, CALR3, EIF2S1, EIF2S2, HSP90B1 and HSPA5. Part of a large chaperone multiprotein complex comprising DNAJB11, HSP90B1, HSPA5, HYOU, PDIA2, PDIA4, PDIA6, PPIB, SDF2L1, UGGT1 and very small amounts of ERP29, but not, or at very low levels, CALR nor CANX. Interacts with AIMP1; regulates its retention in the endoplasmic reticulum. Hyperglycosylated form interacts with OS9; promoting its degradation by the endoplasmic reticulum associated degradation (ERAD). Interacts with CNPY3. This interaction is disrupted in the presence of ATP. Interacts with TLR4 and TLR9, but not with TLR3. Interacts with MZB1 in a calcium-dependent manner. Interacts with METTL23. Interacts with IL1B; the interaction facilitates cargo translocation into the ERGIC. Interacts with EIF2AK3. Phosphorylated by CK2. Post-translationally, N-glycosylated cotranslationally at Asn-217 by STT3A-containing OST-A complex: this glycosylation is constitutive. In response to various stress, 5 additional facultative sites (Asn-62, Asn-107, Asn-445, Asn-481 and Asn-502) can be glycosylated post-translationally by STT3B-containing OST-B complex, leading to a hyperglycosylated form that is degraded by the ER-associated degradation (ERAD) pathway. In normal conditions, the OST-A complex together with CCDC134 prevent glycosylation at facultative sites during protein folding, thereby preventing hyperglycosylation. Mechanistically, nascent HSP90B1 is tethered during translation to a specialized CCDC134-containing translocon that forms a microenvironment for its folding, in which STT3A associates with the SRT pseudosubstrate motif, and prevents access to facultative glycosylation sites until folding is completed, rendering its facultative sites inaccessible to the OST-B complex.

Its subcellular location is the endoplasmic reticulum lumen. It is found in the sarcoplasmic reticulum lumen. The protein resides in the melanosome. It carries out the reaction ATP + H2O = ADP + phosphate + H(+). Functionally, ATP-dependent chaperone involved in the processing of proteins in the endoplasmic reticulum, regulating their transport. Together with MESD, acts as a modulator of the Wnt pathway by promoting the folding of LRP6, a coreceptor of the canonical Wnt pathway. When associated with CNPY3, required for proper folding of Toll-like receptors. Promotes folding and trafficking of TLR4 to the cell surface. May participate in the unfolding of cytosolic leaderless cargos (lacking the secretion signal sequence) such as the interleukin 1/IL-1 to facilitate their translocation into the ERGIC (endoplasmic reticulum-Golgi intermediate compartment) and secretion; the translocation process is mediated by the cargo receptor TMED10. This Sus scrofa (Pig) protein is Endoplasmin (HSP90B1).